A 133-amino-acid chain; its full sequence is ATP synthase epsilon chain (133 aa).

Belongs to the ATPase epsilon chain family. As to quaternary structure, F-type ATPases have 2 components, CF(1) - the catalytic core - and CF(0) - the membrane proton channel. CF(1) has five subunits: alpha(3), beta(3), gamma(1), delta(1), epsilon(1). CF(0) has three main subunits: a, b and c.

The protein resides in the cell inner membrane. Functionally, produces ATP from ADP in the presence of a proton gradient across the membrane. The sequence is that of ATP synthase epsilon chain from Paramagnetospirillum magneticum (strain ATCC 700264 / AMB-1) (Magnetospirillum magneticum).